The chain runs to 499 residues: Probable dipeptidase B (499 aa).

C26 is an active-site residue.

Belongs to the peptidase C69 family.

The enzyme catalyses an L-aminoacyl-L-amino acid + H2O = 2 an L-alpha-amino acid. This Streptococcus pyogenes serotype M18 (strain MGAS8232) protein is Probable dipeptidase B (pepDB).